Consider the following 309-residue polypeptide: Probable lipid kinase YegS-like (309 aa).

Residues 1 to 134 (MAPSHWRLIL…VDLLRIDADH (134 aa)) form the DAGKc domain. Residues threonine 39, 65–71 (GDGTLSE), and threonine 96 contribute to the ATP site. Mg(2+)-binding residues include leucine 219, aspartate 222, and leucine 224. Residue glutamate 280 is the Proton acceptor of the active site.

This sequence belongs to the diacylglycerol/lipid kinase family. YegS lipid kinase subfamily. It depends on Mg(2+) as a cofactor. The cofactor is Ca(2+).

It localises to the cytoplasm. Its function is as follows. Probably phosphorylates lipids; the in vivo substrate is unknown. This is Probable lipid kinase YegS-like from Xanthomonas axonopodis pv. citri (strain 306).